A 171-amino-acid polypeptide reads, in one-letter code: Co-chaperone protein HscB homolog (171 aa).

In terms of domain architecture, J spans 2–74 (NHFELFGLPS…ISRAEYILAE (73 aa)).

It belongs to the HscB family. As to quaternary structure, interacts with HscA and stimulates its ATPase activity.

In terms of biological role, co-chaperone involved in the maturation of iron-sulfur cluster-containing proteins. Seems to help targeting proteins to be folded toward HscA. The protein is Co-chaperone protein HscB homolog of Vibrio parahaemolyticus serotype O3:K6 (strain RIMD 2210633).